Reading from the N-terminus, the 453-residue chain is Acyl-coenzyme A thioesterase 2, mitochondrial (453 aa).

A mitochondrion-targeting transit peptide spans 1-42 (MVASSFAVLRASRLCQWGWKSWTQLSGPPPLSTGGRTTFART). The residue at position 83 (Lys83) is an N6-acetyllysine. Catalysis depends on charge relay system residues Ser273, Asp365, and His399. Lys447 carries the post-translational modification N6-succinyllysine.

The protein belongs to the C/M/P thioester hydrolase family. As to quaternary structure, monomer. Post-translationally, the N-terminus is blocked. Constitutively expressed in heart and brown fat. Strongly induced in liver, and weakly in kidney, in peroxisome proliferator treated rat.

It localises to the mitochondrion matrix. It catalyses the reaction hexadecanoyl-CoA + H2O = hexadecanoate + CoA + H(+). The enzyme catalyses tetradecanoyl-CoA + H2O = tetradecanoate + CoA + H(+). It carries out the reaction octadecanoyl-CoA + H2O = octadecanoate + CoA + H(+). The catalysed reaction is eicosanoyl-CoA + H2O = eicosanoate + CoA + H(+). It catalyses the reaction decanoyl-CoA + H2O = decanoate + CoA + H(+). The enzyme catalyses dodecanoyl-CoA + H2O = dodecanoate + CoA + H(+). It carries out the reaction (9Z)-octadecenoyl-CoA + H2O = (9Z)-octadecenoate + CoA + H(+). The catalysed reaction is (9Z)-hexadecenoyl-CoA + H2O = (9Z)-hexadecenoate + CoA + H(+). It catalyses the reaction (9E)-octadecenoyl-CoA + H2O = (9E)-octadecenoate + CoA + H(+). The enzyme catalyses (9Z,12Z)-octadecadienoyl-CoA + H2O = (9Z,12Z)-octadecadienoate + CoA + H(+). The protein operates within lipid metabolism; fatty acid metabolism. Functionally, catalyzes the hydrolysis of acyl-CoAs into free fatty acids and coenzyme A (CoASH), regulating their respective intracellular levels. Displays higher activity toward long chain acyl CoAs (C14-C20). The enzyme is involved in enhancing the hepatic fatty acid oxidation in mitochondria. The protein is Acyl-coenzyme A thioesterase 2, mitochondrial (Acot2) of Rattus norvegicus (Rat).